A 60-amino-acid chain; its full sequence is uncharacterized protein (60 aa).

Residues Met-1–Ala-21 form the signal peptide.

This is an uncharacterized protein from Rickettsia prowazekii (strain Madrid E).